The following is a 488-amino-acid chain: 3-octaprenyl-4-hydroxybenzoate carboxy-lyase (488 aa).

Asparagine 172 is a binding site for Mn(2+). Prenylated FMN contacts are provided by residues 175-177, 189-191, and 194-195; these read IYR, RWL, and RG. Residue glutamate 238 coordinates Mn(2+). The active-site Proton donor is aspartate 287.

It belongs to the UbiD family. In terms of assembly, homohexamer. Prenylated FMN serves as cofactor. Mn(2+) is required as a cofactor.

Its subcellular location is the cell membrane. The catalysed reaction is a 4-hydroxy-3-(all-trans-polyprenyl)benzoate + H(+) = a 2-(all-trans-polyprenyl)phenol + CO2. It participates in cofactor biosynthesis; ubiquinone biosynthesis. In terms of biological role, catalyzes the decarboxylation of 3-octaprenyl-4-hydroxy benzoate to 2-octaprenylphenol, an intermediate step in ubiquinone biosynthesis. In Halorhodospira halophila (strain DSM 244 / SL1) (Ectothiorhodospira halophila (strain DSM 244 / SL1)), this protein is 3-octaprenyl-4-hydroxybenzoate carboxy-lyase.